The sequence spans 78 residues: Probable [Fe-S]-dependent transcriptional repressor (78 aa).

Iron-sulfur cluster-binding residues include Cys-56, Cys-61, Cys-64, and Cys-70.

This sequence belongs to the FeoC family.

Its function is as follows. May function as a transcriptional regulator that controls feoABC expression. The chain is Probable [Fe-S]-dependent transcriptional repressor from Salmonella agona (strain SL483).